Here is a 181-residue protein sequence, read N- to C-terminus: ATP-dependent protease subunit HslV (181 aa).

Residue T7 is part of the active site. Na(+)-binding residues include G166, C169, and T172.

This sequence belongs to the peptidase T1B family. HslV subfamily. As to quaternary structure, a double ring-shaped homohexamer of HslV is capped on each side by a ring-shaped HslU homohexamer. The assembly of the HslU/HslV complex is dependent on binding of ATP.

The protein localises to the cytoplasm. The catalysed reaction is ATP-dependent cleavage of peptide bonds with broad specificity.. With respect to regulation, allosterically activated by HslU binding. Functionally, protease subunit of a proteasome-like degradation complex believed to be a general protein degrading machinery. The sequence is that of ATP-dependent protease subunit HslV from Variovorax paradoxus (strain S110).